We begin with the raw amino-acid sequence, 299 residues long: Protease HtpX homolog (299 aa).

Transmembrane regions (helical) follow at residues 19–39 (LFIV…VWYF) and 41–61 (WGIT…WIAY). His-146 serves as a coordination point for Zn(2+). The active site involves Glu-147. His-150 contributes to the Zn(2+) binding site. A run of 2 helical transmembrane segments spans residues 156-176 (ILLM…RDVF) and 198-218 (IILL…VLII). A Zn(2+)-binding site is contributed by Glu-227.

It belongs to the peptidase M48B family. Zn(2+) is required as a cofactor.

The protein resides in the cell membrane. The chain is Protease HtpX homolog from Caldanaerobacter subterraneus subsp. tengcongensis (strain DSM 15242 / JCM 11007 / NBRC 100824 / MB4) (Thermoanaerobacter tengcongensis).